Reading from the N-terminus, the 363-residue chain is Peptide chain release factor 2 (363 aa).

Residue Q251 is modified to N5-methylglutamine.

Belongs to the prokaryotic/mitochondrial release factor family. Methylated by PrmC. Methylation increases the termination efficiency of RF2.

It is found in the cytoplasm. Its function is as follows. Peptide chain release factor 2 directs the termination of translation in response to the peptide chain termination codons UGA and UAA. This chain is Peptide chain release factor 2 (prfB), found in Helicobacter pylori (strain ATCC 700392 / 26695) (Campylobacter pylori).